Reading from the N-terminus, the 98-residue chain is MSSYKYYDLIRKPIITEKTTTLSEQNKYAFYVDKFAKKLTLKKAIEEIFKVKVKKVNILNVKGKKKRFKGIIGTQINRKKAIVTLEKDHNIDFAGGIK.

This sequence belongs to the universal ribosomal protein uL23 family. In terms of assembly, part of the 50S ribosomal subunit. Contacts protein L29, and trigger factor when it is bound to the ribosome.

One of the early assembly proteins it binds 23S rRNA. One of the proteins that surrounds the polypeptide exit tunnel on the outside of the ribosome. Forms the main docking site for trigger factor binding to the ribosome. This is Large ribosomal subunit protein uL23 from Rickettsia africae (strain ESF-5).